The primary structure comprises 543 residues: Mitochondrial distribution and morphology protein 34 (543 aa).

The SMP-LTD domain occupies methionine 1–leucine 202. The segment at alanine 519–alanine 543 is disordered.

This sequence belongs to the MDM34 family. In terms of assembly, component of the ER-mitochondria encounter structure (ERMES) or MDM complex, composed of MMM1, MDM10, MDM12 and MDM34.

Its subcellular location is the mitochondrion outer membrane. Component of the ERMES/MDM complex, which serves as a molecular tether to connect the endoplasmic reticulum (ER) and mitochondria. Components of this complex are involved in the control of mitochondrial shape and protein biogenesis, and function in nonvesicular lipid trafficking between the ER and mitochondria. MDM34 is required for the interaction of the ER-resident membrane protein MMM1 and the outer mitochondrial membrane-resident beta-barrel protein MDM10. This Clavispora lusitaniae (strain ATCC 42720) (Yeast) protein is Mitochondrial distribution and morphology protein 34.